The primary structure comprises 252 residues: MLTKRIIPCLDVDHGRVKKGINFVQLKDVGDPVAIAKAYQEQGADELVFLDITATNEARGTLVQTVEAVANQVFMPLTVGGGIQSVADMHALLRAGADKVSLNSAAVADPSLLTAGAEKFGRQAIVAAIDTRWQADQNRYQVTVNGGRTSVDLDAITWAKQAVAAGAGELLVTSMDADGTESGFDLRLHQQLTAAVQVPIIASGGAGSTTDFVQLFTQTTVSAGLAASIFHFGELTVPQVKTALKQAKVAVR.

Residues D11 and D130 contribute to the active site.

This sequence belongs to the HisA/HisF family. As to quaternary structure, heterodimer of HisH and HisF.

It localises to the cytoplasm. The catalysed reaction is 5-[(5-phospho-1-deoxy-D-ribulos-1-ylimino)methylamino]-1-(5-phospho-beta-D-ribosyl)imidazole-4-carboxamide + L-glutamine = D-erythro-1-(imidazol-4-yl)glycerol 3-phosphate + 5-amino-1-(5-phospho-beta-D-ribosyl)imidazole-4-carboxamide + L-glutamate + H(+). It functions in the pathway amino-acid biosynthesis; L-histidine biosynthesis; L-histidine from 5-phospho-alpha-D-ribose 1-diphosphate: step 5/9. Its function is as follows. IGPS catalyzes the conversion of PRFAR and glutamine to IGP, AICAR and glutamate. The HisF subunit catalyzes the cyclization activity that produces IGP and AICAR from PRFAR using the ammonia provided by the HisH subunit. The protein is Imidazole glycerol phosphate synthase subunit HisF of Lacticaseibacillus casei (strain BL23) (Lactobacillus casei).